A 148-amino-acid chain; its full sequence is Cuticle protein 8 (148 aa).

Repeat copies occupy residues 16-19 (AAPA), A22, 28-31 (AAPV), 37-40 (AAPA), and 44-47 (AAPV). Residues 58 to 128 (YPKYEFNYGV…RTPGTHPVAV (71 aa)) enclose the Chitin-binding type R&amp;R domain.

Its function is as follows. Component of the cuticle of migratory locust which contains more than 100 different structural proteins. The protein is Cuticle protein 8 of Locusta migratoria (Migratory locust).